We begin with the raw amino-acid sequence, 321 residues long: Ribonucleoside-diphosphate reductase small subunit (321 aa).

Fe cation is bound by residues Asp78, Glu108, and His111. Tyr115 is an active-site residue. Residues 165–185 (ILMILIEGLFFASSFASIAYL) traverse the membrane as a helical segment. Residues Glu171, Glu205, and His208 each contribute to the Fe cation site.

It belongs to the ribonucleoside diphosphate reductase small chain family. Heterotetramer composed of a homodimer of the large subunit (R1) and a homodimer of the small subunit (R2). Larger multisubunit protein complex are also active, composed of (R1)n(R2)n. Fe cation is required as a cofactor.

Its subcellular location is the host membrane. The enzyme catalyses a 2'-deoxyribonucleoside 5'-diphosphate + [thioredoxin]-disulfide + H2O = a ribonucleoside 5'-diphosphate + [thioredoxin]-dithiol. Ribonucleoside-diphosphate reductase holoenzyme provides the precursors necessary for viral DNA synthesis. Allows virus growth in non-dividing cells, as well as reactivation from latency in infected hosts. Catalyzes the biosynthesis of deoxyribonucleotides from the corresponding ribonucleotides. The sequence is that of Ribonucleoside-diphosphate reductase small subunit from Equus caballus (Horse).